Here is a 212-residue protein sequence, read N- to C-terminus: Thymidylate kinase (212 aa).

11 to 18 (GLEGAGKT) contacts ATP.

The protein belongs to the thymidylate kinase family.

It carries out the reaction dTMP + ATP = dTDP + ADP. Functionally, phosphorylation of dTMP to form dTDP in both de novo and salvage pathways of dTTP synthesis. The chain is Thymidylate kinase from Buchnera aphidicola subsp. Schizaphis graminum (strain Sg).